The following is a 198-amino-acid chain: Putative pseudouridine methyltransferase (198 aa).

Residues Leu-132 and Cys-186 each coordinate S-adenosyl-L-methionine.

It belongs to the methyltransferase superfamily. TrmY family.

It is found in the cytoplasm. This is Putative pseudouridine methyltransferase from Vibrio vulnificus (strain CMCP6).